Reading from the N-terminus, the 420-residue chain is ATP-dependent Clp protease ATP-binding subunit ClpX (420 aa).

Positions 3-57 (KKTPGTNGKQKLFCSFCGKEQDAVKRLVAGPGVYICDECISLCNEIIAEDHEHSH) constitute a ClpX-type ZB domain. Residues cysteine 16, cysteine 19, cysteine 38, and cysteine 41 each coordinate Zn(2+). An ATP-binding site is contributed by 122–129 (PTGSGKTL).

The protein belongs to the ClpX chaperone family. As to quaternary structure, component of the ClpX-ClpP complex. Forms a hexameric ring that, in the presence of ATP, binds to fourteen ClpP subunits assembled into a disk-like structure with a central cavity, resembling the structure of eukaryotic proteasomes.

ATP-dependent specificity component of the Clp protease. It directs the protease to specific substrates. Can perform chaperone functions in the absence of ClpP. In Leptospira borgpetersenii serovar Hardjo-bovis (strain L550), this protein is ATP-dependent Clp protease ATP-binding subunit ClpX.